The chain runs to 320 residues: ATP-dependent 6-phosphofructokinase (320 aa).

Gly-12 contacts ATP. ADP contacts are provided by residues 22 to 26 (RGVVR) and 55 to 60 (RYSVSD). ATP is bound by residues 73-74 (RF) and 103-106 (GDGS). A Mg(2+)-binding site is contributed by Asp-104. 126–128 (TID) contributes to the substrate binding site. The active-site Proton acceptor is the Asp-128. Arg-155 provides a ligand contact to ADP. Residues Arg-163 and 170–172 (MGR) contribute to the substrate site. ADP is bound by residues 186-188 (GCE), Lys-212, and 214-216 (KKH). Substrate contacts are provided by residues Glu-223, Arg-244, and 250–253 (HIQR).

Belongs to the phosphofructokinase type A (PFKA) family. ATP-dependent PFK group I subfamily. Prokaryotic clade 'B1' sub-subfamily. In terms of assembly, homotetramer. The cofactor is Mg(2+).

The protein localises to the cytoplasm. The catalysed reaction is beta-D-fructose 6-phosphate + ATP = beta-D-fructose 1,6-bisphosphate + ADP + H(+). It functions in the pathway carbohydrate degradation; glycolysis; D-glyceraldehyde 3-phosphate and glycerone phosphate from D-glucose: step 3/4. With respect to regulation, allosterically activated by ADP and other diphosphonucleosides, and allosterically inhibited by phosphoenolpyruvate. Its function is as follows. Catalyzes the phosphorylation of D-fructose 6-phosphate to fructose 1,6-bisphosphate by ATP, the first committing step of glycolysis. This is ATP-dependent 6-phosphofructokinase from Citrobacter koseri (strain ATCC BAA-895 / CDC 4225-83 / SGSC4696).